The sequence spans 473 residues: Response regulator protein FleR (473 aa).

The region spanning 4–118 (KVLLVEDDRA…ALLDLVARHA (115 aa)) is the Response regulatory domain. A 4-aspartylphosphate modification is found at Asp53. One can recognise a Sigma-54 factor interaction domain in the interval 130–359 (PVALEPASRQ…LDNAIQRALI (230 aa)). ATP contacts are provided by residues 158–165 (GESGTGKE) and 221–230 (ADGGTILLDE).

In terms of biological role, member of the two-component regulatory system FleS/FleR that regulates the expression of multiple genes involved in flagellar synthesis, adhesion, swarming, motility and antibiotic resistance. May function as a transcriptional activator by direct binding to a cis-acting sequence upstream of the target genes. The sequence is that of Response regulator protein FleR from Pseudomonas aeruginosa (strain ATCC 15692 / DSM 22644 / CIP 104116 / JCM 14847 / LMG 12228 / 1C / PRS 101 / PAO1).